Reading from the N-terminus, the 337-residue chain is Anthranilate phosphoribosyltransferase (337 aa).

Residues G81, 84–85, S89, 91–94, 109–117, and A121 each bind 5-phospho-alpha-D-ribose 1-diphosphate; these read GD, NVST, and KHGNRALSS. Position 81 (G81) interacts with anthranilate. Mg(2+) is bound at residue S93. Residue N112 participates in anthranilate binding. R167 contributes to the anthranilate binding site. Positions 226 and 227 each coordinate Mg(2+).

The protein belongs to the anthranilate phosphoribosyltransferase family. In terms of assembly, homodimer. The cofactor is Mg(2+).

The enzyme catalyses N-(5-phospho-beta-D-ribosyl)anthranilate + diphosphate = 5-phospho-alpha-D-ribose 1-diphosphate + anthranilate. It functions in the pathway amino-acid biosynthesis; L-tryptophan biosynthesis; L-tryptophan from chorismate: step 2/5. Catalyzes the transfer of the phosphoribosyl group of 5-phosphorylribose-1-pyrophosphate (PRPP) to anthranilate to yield N-(5'-phosphoribosyl)-anthranilate (PRA). In Bradyrhizobium diazoefficiens (strain JCM 10833 / BCRC 13528 / IAM 13628 / NBRC 14792 / USDA 110), this protein is Anthranilate phosphoribosyltransferase.